Here is a 59-residue protein sequence, read N- to C-terminus: Mitochondrial sheath formation-associated protein (59 aa).

The Mitochondrial intermembrane portion of the chain corresponds to 1–6 (MIVLGW). The next 2 membrane-spanning stretches (helical) occupy residues 2 to 22 (IVLGWMFFVGLVCYMGTFPEL) and 7 to 23 (MFFVGLVCYMGTFPELM). The Cytoplasmic portion of the chain corresponds to 24-40 (PPTLKWQERWPVQESKT).

In terms of assembly, interacts with VDAC3.

The protein resides in the mitochondrion outer membrane. In terms of biological role, regulates sperm development. May be involved in mitochondrial sheath formation. The polypeptide is Mitochondrial sheath formation-associated protein (Homo sapiens (Human)).